The primary structure comprises 2121 residues: Non-reducing polyketide synthase aoiG (2121 aa).

The region spanning 5 to 258 (YIFGDQTVRV…LPVSIYAPYH (254 aa)) is the Starter acyltransferase (SAT) domain. A Ketosynthase family 3 (KS3) domain is found at 386 to 817 (SSKIAIIGFS…GGNTAVLVED (432 aa)). Catalysis depends on for beta-ketoacyl synthase activity residues Cys-558, His-693, and His-735. The region spanning 921-1239 (FLFTGQGAQQ…LSVLHLAGVR (319 aa)) is the Malonyl-CoA:ACP transacylase (MAT) domain. An N-terminal hotdog fold region spans residues 1302-1433 (QKILEEEMTA…CTIELQRPHQ (132 aa)). The region spanning 1302–1608 (QKILEEEMTA…FQKVARRVLE (307 aa)) is the PKS/mFAS DH domain. His-1334 functions as the Proton acceptor; for dehydratase activity in the catalytic mechanism. The interval 1461-1608 (THKMRRGVAY…FQKVARRVLE (148 aa)) is C-terminal hotdog fold. Catalysis depends on Asp-1519, which acts as the Proton donor; for dehydratase activity. Positions 1646–1723 (PHVEDAWQQV…SLRIYLNMSS (78 aa)) constitute a Carrier 1 domain. Position 1683 is an O-(pantetheine 4'-phosphoryl)serine (Ser-1683). Positions 1728–1752 (DSIETSSYPTPDESTTTTITSPSGS) are enriched in low complexity. A disordered region spans residues 1728–1760 (DSIETSSYPTPDESTTTTITSPSGSDRNVGRNS). The Carrier 2 domain maps to 1763–1840 (DGVGTTVGLV…AITAALHAIF (78 aa)). Position 1800 is an O-(pantetheine 4'-phosphoryl)serine (Ser-1800). The TE/CLC (thioesterase/Claisen cyclase) domain stretch occupies residues 1872–1976 (TLFLFPDGSG…ILIDSPNPMG (105 aa)).

Pantetheine 4'-phosphate serves as cofactor.

Non-reducing polyketide synthase; part of the gene cluster that mediates the biosynthesis of a methylated derivative of known natural products orthosporin and diaporthin. AoiG catalyzes the biosynthesis of the hexaketide isocoumarin scaffold, via condensation of one acetyl-CoA starter unit with 6 malonyl-CoA units. An oxidoreductase that has still to be identified catalyzes the stereospecific reduction of the carbonyl moiety of the hexaketide isocoumarin scaffold to generate the S-configured secondary alcohol at C-11 of orthosporin. The methyltrasferase aoiF then catalyzes the biotransformation of not only orthosporin to diaporthin but also diaporthin to the final product, by performing a tandem methylation of the polyketide core. The sequence is that of Non-reducing polyketide synthase aoiG from Aspergillus oryzae (strain ATCC 42149 / RIB 40) (Yellow koji mold).